The chain runs to 414 residues: Glutamyl-tRNA reductase (414 aa).

Substrate contacts are provided by residues 49-52 (TCNR), S108, 113-115 (EPQ), and Q119. The active-site Nucleophile is the C50. An NADP(+)-binding site is contributed by 188-193 (GAGQTG).

The protein belongs to the glutamyl-tRNA reductase family. Homodimer.

It carries out the reaction (S)-4-amino-5-oxopentanoate + tRNA(Glu) + NADP(+) = L-glutamyl-tRNA(Glu) + NADPH + H(+). It functions in the pathway porphyrin-containing compound metabolism; protoporphyrin-IX biosynthesis; 5-aminolevulinate from L-glutamyl-tRNA(Glu): step 1/2. Its function is as follows. Catalyzes the NADPH-dependent reduction of glutamyl-tRNA(Glu) to glutamate 1-semialdehyde (GSA). This chain is Glutamyl-tRNA reductase, found in Francisella tularensis subsp. holarctica (strain FTNF002-00 / FTA).